Consider the following 253-residue polypeptide: Imidazole glycerol phosphate synthase subunit HisF (253 aa).

Residues D11 and D130 contribute to the active site.

The protein belongs to the HisA/HisF family. In terms of assembly, heterodimer of HisH and HisF.

The protein resides in the cytoplasm. The enzyme catalyses 5-[(5-phospho-1-deoxy-D-ribulos-1-ylimino)methylamino]-1-(5-phospho-beta-D-ribosyl)imidazole-4-carboxamide + L-glutamine = D-erythro-1-(imidazol-4-yl)glycerol 3-phosphate + 5-amino-1-(5-phospho-beta-D-ribosyl)imidazole-4-carboxamide + L-glutamate + H(+). Its pathway is amino-acid biosynthesis; L-histidine biosynthesis; L-histidine from 5-phospho-alpha-D-ribose 1-diphosphate: step 5/9. In terms of biological role, IGPS catalyzes the conversion of PRFAR and glutamine to IGP, AICAR and glutamate. The HisF subunit catalyzes the cyclization activity that produces IGP and AICAR from PRFAR using the ammonia provided by the HisH subunit. This Paracoccus denitrificans (strain Pd 1222) protein is Imidazole glycerol phosphate synthase subunit HisF.